The chain runs to 1039 residues: uncharacterized protein (1039 aa).

This is an uncharacterized protein from Treponema pallidum (strain Nichols).